The chain runs to 556 residues: Inositol 1,4,5-trisphosphate receptor-interacting protein (556 aa).

An N-terminal signal peptide occupies residues 1 to 15; it reads MALGLFRVCLVVVTA. The Extracellular portion of the chain corresponds to 16–88; sequence IINHPLLFPR…EGQQQNESRT (73 aa). N27 and N84 each carry an N-linked (GlcNAc...) asparagine glycan. Positions 32 to 87 form a coiled coil; sequence ENEEEIIRQMQAHQEKLQLEQLRLEEEMARLAADKEAEKEALERVAEEGQQQNESR. Residues 89–107 traverse the membrane as a helical segment; it reads AWDLWSTLCMILFLVIEVW. Topologically, residues 108–556 are cytoplasmic; the sequence is RQDHQDAPSP…ASLPPKTVIL (449 aa).

The protein belongs to the ITPRIP family. As to quaternary structure, interacts with ITPR.

It localises to the cell membrane. The protein localises to the nucleus outer membrane. Enhances Ca(2+)-mediated inhibition of inositol 1,4,5-triphosphate receptor (ITPR) Ca(2+) release. The chain is Inositol 1,4,5-trisphosphate receptor-interacting protein (ITPRIP) from Bos taurus (Bovine).